A 206-amino-acid chain; its full sequence is Ribonuclease HII (206 aa).

The RNase H type-2 domain maps to 1–206; that stretch reads MKVLGIDEAG…SWATVQKKKQ (206 aa). A divalent metal cation contacts are provided by aspartate 7, glutamate 8, and aspartate 105.

The protein belongs to the RNase HII family. Requires Mn(2+) as cofactor. Mg(2+) serves as cofactor.

The protein resides in the cytoplasm. The catalysed reaction is Endonucleolytic cleavage to 5'-phosphomonoester.. Its function is as follows. Endonuclease that specifically degrades the RNA of RNA-DNA hybrids. The polypeptide is Ribonuclease HII (rnhB) (Methanothermobacter thermautotrophicus (strain ATCC 29096 / DSM 1053 / JCM 10044 / NBRC 100330 / Delta H) (Methanobacterium thermoautotrophicum)).